We begin with the raw amino-acid sequence, 307 residues long: UDP-N-acetylenolpyruvoylglucosamine reductase (307 aa).

The FAD-binding PCMH-type domain maps to 27–193 (RVGGPADVVF…LDAVFEGLAD (167 aa)). Residue arginine 172 is part of the active site. Catalysis depends on serine 222, which acts as the Proton donor. Residue glutamate 299 is part of the active site.

Belongs to the MurB family. Requires FAD as cofactor.

The protein resides in the cytoplasm. It catalyses the reaction UDP-N-acetyl-alpha-D-muramate + NADP(+) = UDP-N-acetyl-3-O-(1-carboxyvinyl)-alpha-D-glucosamine + NADPH + H(+). It participates in cell wall biogenesis; peptidoglycan biosynthesis. Functionally, cell wall formation. The sequence is that of UDP-N-acetylenolpyruvoylglucosamine reductase from Caulobacter sp. (strain K31).